A 138-amino-acid polypeptide reads, in one-letter code: MSTIRVDVVSAEQSIFSGEAKFVALPGESGELGILRGHTPLITRIRPGSVRIEKADGDEEFVFVAGGYLEVQPDRVTVLADTAIRGHDLDEAKAIEAKKRAEEAMQNRGTDFDMALAQSEFAMAAAQLAAIARFRRKK.

This sequence belongs to the ATPase epsilon chain family. As to quaternary structure, F-type ATPases have 2 components, CF(1) - the catalytic core - and CF(0) - the membrane proton channel. CF(1) has five subunits: alpha(3), beta(3), gamma(1), delta(1), epsilon(1). CF(0) has three main subunits: a, b and c.

It localises to the cell membrane. In terms of biological role, produces ATP from ADP in the presence of a proton gradient across the membrane. This chain is ATP synthase epsilon chain, found in Polynucleobacter asymbioticus (strain DSM 18221 / CIP 109841 / QLW-P1DMWA-1) (Polynucleobacter necessarius subsp. asymbioticus).